We begin with the raw amino-acid sequence, 196 residues long: Nucleoside triphosphate pyrophosphatase (196 aa).

D73 (proton acceptor) is an active-site residue.

It belongs to the Maf family. It depends on a divalent metal cation as a cofactor.

The protein localises to the cytoplasm. It carries out the reaction a ribonucleoside 5'-triphosphate + H2O = a ribonucleoside 5'-phosphate + diphosphate + H(+). It catalyses the reaction a 2'-deoxyribonucleoside 5'-triphosphate + H2O = a 2'-deoxyribonucleoside 5'-phosphate + diphosphate + H(+). Nucleoside triphosphate pyrophosphatase. May have a dual role in cell division arrest and in preventing the incorporation of modified nucleotides into cellular nucleic acids. In Anaplasma marginale (strain St. Maries), this protein is Nucleoside triphosphate pyrophosphatase.